The chain runs to 445 residues: Putative transcription factor bHLH056 (445 aa).

Disordered stretches follow at residues Asn-36 to Leu-70, Gln-224 to His-260, and Pro-365 to Ala-445. Basic and acidic residues predominate over residues Ser-231–Arg-246. The 50-residue stretch at Arg-255–Leu-304 folds into the bHLH domain. Residues Gln-418–Ser-433 are compositionally biased toward low complexity.

Homodimer.

It localises to the nucleus. This chain is Putative transcription factor bHLH056 (BHLH56), found in Arabidopsis thaliana (Mouse-ear cress).